A 354-amino-acid chain; its full sequence is Uroporphyrinogen decarboxylase (354 aa).

Substrate is bound by residues 35 to 39, D84, Y159, S214, and H333; that span reads RQAGR.

The protein belongs to the uroporphyrinogen decarboxylase family. As to quaternary structure, homodimer.

The protein resides in the cytoplasm. The enzyme catalyses uroporphyrinogen III + 4 H(+) = coproporphyrinogen III + 4 CO2. The protein operates within porphyrin-containing compound metabolism; protoporphyrin-IX biosynthesis; coproporphyrinogen-III from 5-aminolevulinate: step 4/4. In terms of biological role, catalyzes the decarboxylation of four acetate groups of uroporphyrinogen-III to yield coproporphyrinogen-III. This is Uroporphyrinogen decarboxylase from Nocardia farcinica (strain IFM 10152).